Reading from the N-terminus, the 552-residue chain is Glutamine--tRNA ligase (552 aa).

The 'HIGH' region motif lies at P33 to H43. ATP contacts are provided by residues E34–N36 and H40–S46. Positions 66 and 210 each coordinate L-glutamine. ATP is bound by residues T229, R259–L260, and M267–K269. The 'KMSKS' region motif lies at V266 to R270.

This sequence belongs to the class-I aminoacyl-tRNA synthetase family. In terms of assembly, monomer.

Its subcellular location is the cytoplasm. It catalyses the reaction tRNA(Gln) + L-glutamine + ATP = L-glutaminyl-tRNA(Gln) + AMP + diphosphate. This chain is Glutamine--tRNA ligase, found in Clostridium perfringens (strain ATCC 13124 / DSM 756 / JCM 1290 / NCIMB 6125 / NCTC 8237 / Type A).